A 442-amino-acid polypeptide reads, in one-letter code: Elongation factor 1-gamma (442 aa).

In terms of domain architecture, GST N-terminal spans 2–87 (AAGTLYTYPE…YLSNDVLRGS (86 aa)). A GST C-terminal domain is found at 88–216 (TPQASAQVLQ…VKLCEKMAQF (129 aa)). Composition is skewed to basic and acidic residues over residues 227–242 (KKEA…KEGG) and 249–263 (QEKK…KAAP). Residues 227-273 (KKEAPIKKEKGGKEGGKQQPQQQEKKEKKKEEKKAAPAEEEMDECEA) are disordered. Residues 281–442 (AKDPFAHLPK…KPFNQGKIFK (162 aa)) enclose the EF-1-gamma C-terminal domain.

EF-1 is composed of four subunits: alpha, beta, delta, and gamma.

In terms of biological role, probably plays a role in anchoring the complex to other cellular components. This is Elongation factor 1-gamma (eef1g) from Danio rerio (Zebrafish).